An 835-amino-acid polypeptide reads, in one-letter code: MLNFLKKIFNSSKKALRKARTIANKVQNLEAQMALLDDKDFATKTAELKKLFQEGKTLNQLLPEAYALAKEATKRVTGLTPYYVQILGAVILHQGNISEMKTGEGKTLTAIMPAYLNALSGNPVHIVTVNEYLAKREFEGSIGDVFRFLGMTVGLNTKDKDHAQKQQAYLCDILYTTNSELGFDYLRDNMEIEASNLVMKRPYSYAIVDEVDSILIDEARTPLIISQSVKETKNLYKEAQRFVRTLKNRHYLIELETKTIELTEEGITKAENFFQIDNLYNVEHASLLHHVKNALKAAFTMHKDKDYLVDYKDGQVLIIDQFTGRALPGRQFSDGLHQALEAKEGVLIKEETSIGATITYQNFFRLYHKLSGMTGTAKTEEDEFRDIYNMEVIEIPTNVPMIRIDEPDFIFVSLKEKYDALIEEITSRHKKRQPILIGTTTVEVSEIISKKLKKHSIKHEILNAKNHSKEADIIAKAGLKNAVTIATNMAGRGTDIRLGEGVKELGGLAVLGTERHESRRIDNQLRGRAGRQGDPGYSRFFISSEDELAQRFGGTRIEKIISLLQKISDSETKTSSKMVTKFFTKIQKKVESSNFDYRKYLLKYDDILRIQREIIYNQRKEILVSNRVEQIVQDLMQKTLNKAILPHFTNNPTQCQTQTLITFLENKFFPKQTFDLEEVQELCNNPKTNSLDSFQQHLLQKVKXTLQSQKDFFEKDPDKAQYFAKGLKWITLKIIDNYYQRHINDMSSLRQGIGFVSYGQQDSFIEYQKEGQVLFNNMIAKIANDITATILKFSFADSFXTPPKQKVFLNNDSSDDESSKKRRTRKVRTSKKPWN.

Residues Gln85, 103 to 107, and Asp495 contribute to the ATP site; that span reads GEGKT. Residues 806–835 are disordered; the sequence is KVFLNNDSSDDESSKKRRTRKVRTSKKPWN. Residues 820-835 show a composition bias toward basic residues; it reads KKRRTRKVRTSKKPWN.

It belongs to the SecA family. In terms of assembly, monomer and homodimer. Part of the essential Sec protein translocation apparatus which comprises SecA, SecYEG and auxiliary proteins SecDF. Other proteins may also be involved.

The protein resides in the cell membrane. The protein localises to the cytoplasm. It carries out the reaction ATP + H2O + cellular proteinSide 1 = ADP + phosphate + cellular proteinSide 2.. In terms of biological role, part of the Sec protein translocase complex. Interacts with the SecYEG preprotein conducting channel. Has a central role in coupling the hydrolysis of ATP to the transfer of proteins into and across the cell membrane, serving as an ATP-driven molecular motor driving the stepwise translocation of polypeptide chains across the membrane. This is Protein translocase subunit SecA from Onion yellows phytoplasma (strain OY-M).